The primary structure comprises 68 residues: MPKLKTKSSAKKRFKISATGKVMMAQAGKRHGMIKRTNSQIRKLRGTTAMSKQDGKIVKSYMPYSLRG.

The protein belongs to the bacterial ribosomal protein bL35 family.

In Pelagibacter ubique (strain HTCC1062), this protein is Large ribosomal subunit protein bL35.